The primary structure comprises 4074 residues: Fibrocystin (4074 aa).

The first 22 residues, 1–22 (MIVWLISLMSIEILLLAGPALS), serve as a signal peptide directing secretion. N-linked (GlcNAc...) asparagine glycosylation is found at Asn54 and Asn224. The IPT/TIG 1 domain maps to 258 to 310 (EILSVFPETGSLGGKTDIIITGDFFDNPALVTIAGVPCDIRHMSPRKIECTTR). One can recognise a PA14 domain in the interval 323 to 483 (AGNRGLLFEV…TWLNPDVVST (161 aa)). N-linked (GlcNAc...) asparagine glycosylation is found at Asn355, Asn385, Asn518, Asn527, Asn640, Asn710, Asn741, Asn822, Asn829, Asn868, Asn953, Asn966, Asn976, Asn1006, Asn1059, Asn1083, Asn1115, Asn1134, Asn1233, Asn1240, Asn1274, Asn1284, Asn1308, Asn1319, Asn1342, Asn1373, Asn1445, Asn1456, Asn1471, Asn1490, Asn1528, Asn1560, Asn1578, Asn1598, Asn1627, Asn1694, Asn1760, Asn1775, Asn1789, Asn1875, Asn1915, Asn1941, Asn1955, Asn2030, Asn2111, and Asn2140. Residues 944-1000 (SLLIYIFGINFSGDPQALEIMVNKTNCKVIFSNQTNVICQTDLLPVGMHRLFMVVRP) form the IPT/TIG 2 domain. 3 IPT/TIG domains span residues 1018 to 1101 (PRLD…AFTY), 1107 to 1186 (PVIT…RSPG), and 1199 to 1274 (SIEP…WAGN). The IPT/TIG 6 domain occupies 1385 to 1464 (PWIMAISPTH…LNVTVIVNGL (80 aa)). The IPT/TIG 7 domain maps to 1573–1641 (HYFPKNFSIH…LVIEVDGLSY (69 aa)). A G8 1 domain is found at 1928-2049 (HSWFPERVPQ…PEVTFTHLQA (122 aa)). PbH1 repeat units lie at residues 2245-2267 (TLGL…LVGT), 2288-2322 (EQGN…YILN), 2351-2373 (APLL…FIYP), 2383-2404 (RGPT…RISR), and 2405-2427 (SSNL…DILE). Residue Asn2390 is glycosylated (N-linked (GlcNAc...) asparagine). Residues Asn2431, Asn2467, Asn2531, Asn2549, Asn2579, Asn2591, Asn2749, Asn2764, Asn2972, and Asn3004 are each glycosylated (N-linked (GlcNAc...) asparagine). A PbH1 6 repeat occupies 2460–2483 (RWELIISNTTFVNFDLTDCVSIRT). Positions 2743-2869 (EGWGGHNHTI…PKKSWTRLAA (127 aa)) constitute a G8 2 domain. The stretch at 3029–3051 (SHGIILNDNIVFGTVGHGIDLEG) is one PbH1 7 repeat. A glycan (N-linked (GlcNAc...) asparagine) is linked at Asn3053. The stretch at 3082–3104 (AKDINLYGNVVAGSERIGFHIQG) is one PbH1 8 repeat. N-linked (GlcNAc...) asparagine glycans are attached at residues Asn3136, Asn3165, Asn3221, Asn3484, Asn3702, Asn3721, and Asn3833. Residues 3158-3183 (ENSVEIENITLVDNSIGLLATVYVSS) form a PbH1 9 repeat. A helical transmembrane segment spans residues 3854-3874 (IILAVSLCSVASWLALCCLVC). Positions 3871–3888 (CLVCCWFRKSKSRKIKSE) are ciliary targeting sequence (CST). 3 disordered regions span residues 3896-3919 (NDQK…KEDT), 3943-3965 (NGVS…REED), and 4031-4074 (LQGQ…QEQL). Composition is skewed to basic and acidic residues over residues 3910-3919 (RSQETKKEDT) and 3954-3965 (AVREEGSSREED). Residues 3947–3976 (RRKVSRRAVREEGSSREEDVVPAPRIISIT) form a nuclear localization signal (NLS) region.

In terms of assembly, interacts with CAMLG. Interacts with PKD2. Interacts (via CST) with ARF4; this interaction allows an efficient PKHD1 trafficking to the cilium. Interacts (via CST) with RAB8A; this interaction controls trafficking through the endomembrane systeme and to the cilium. Interacts (via CST) with TULP3; this interaction allows PKHD1 trafficking to the cilium. Post-translationally, palmitoylated. Palmitoylation facilitates the trafficking to the cilia and membrane targeting. In terms of processing, N-glycosylated. Several proteolytic cleavages occur within the extracellular domain, whereas at least one cleavage occurs within the cytoplasmic domain. Cleaved by a probable proprotein convertase which produces an extracellular domain (polyductin extracellular domain, (PECD)) and a C-terminal fragment (polyductin transmembrane fragment (PTM)) which are tethered together by disulfide bonds. This extracellular domain (PECD) is then shed from the primary cilium by activation of a member of the ADAM metalloproteinase disintegrins family, resulting in concomitant release of an intra-cellular C-terminal fragment (ICD) via a gamma-secretase-dependent process. The proteolytic cleavage of the C-terminal intracellular fragment (ICD) is controlled by cytosolic calcium concentration and activation of PKC.

It is found in the cell membrane. The protein resides in the cytoplasm. The protein localises to the apical cell membrane. Its subcellular location is the cytoskeleton. It localises to the cilium basal body. It is found in the cell projection. The protein resides in the cilium. The protein localises to the spindle. Its subcellular location is the chromosome. It localises to the centromere. It is found in the nucleus. The protein resides in the secreted. The protein localises to the extracellular exosome. Its subcellular location is the endoplasmic reticulum. It localises to the golgi apparatus. Functionally, promotes ciliogenesis in renal epithelial cells and therefore participates in the tubules formation and/ or ensures the maintenance of the architecture of the lumen of the kidney. Has an impact on cellular symmetry by ensuring correct bipolar cell division through the regulation of centrosome duplication and mitotic spindle assembly and by maintaining oriented cell division (OCD) during tubular elongation through planar cell polarity (PCP) pathway. During epithelial cell morphogenesis, it also regulates cell-cell and cell-matrix adhesion and participates in cell motility. Promotes cell-cell contact through the positive regulation of PTK2 kinase activity leading to either positive regulation of epithelial cell proliferation through the HRAS/RAF1 pathways, or negative regulation of apoptosis through the PDK1/AKT1 pathway. May act in collecting-duct and biliary differentiation. May participate in the regulation of the cholangiocytes proliferation and the CCN2 production in an CXCL8-dependent manner. This chain is Fibrocystin, found in Canis lupus familiaris (Dog).